A 989-amino-acid polypeptide reads, in one-letter code: Bifunctional glutamine synthetase adenylyltransferase/adenylyl-removing enzyme (989 aa).

An adenylyl removase region spans residues 1–473 (MRGPLEPDSA…HYANLFEDVA (473 aa)). Residues 479–989 (DADLMFPPDE…FERILETAAE (511 aa)) are adenylyl transferase.

This sequence belongs to the GlnE family. Mg(2+) serves as cofactor.

The enzyme catalyses [glutamine synthetase]-O(4)-(5'-adenylyl)-L-tyrosine + phosphate = [glutamine synthetase]-L-tyrosine + ADP. The catalysed reaction is [glutamine synthetase]-L-tyrosine + ATP = [glutamine synthetase]-O(4)-(5'-adenylyl)-L-tyrosine + diphosphate. In terms of biological role, involved in the regulation of glutamine synthetase GlnA, a key enzyme in the process to assimilate ammonia. When cellular nitrogen levels are high, the C-terminal adenylyl transferase (AT) inactivates GlnA by covalent transfer of an adenylyl group from ATP to specific tyrosine residue of GlnA, thus reducing its activity. Conversely, when nitrogen levels are low, the N-terminal adenylyl removase (AR) activates GlnA by removing the adenylyl group by phosphorolysis, increasing its activity. The regulatory region of GlnE binds the signal transduction protein PII (GlnB) which indicates the nitrogen status of the cell. The polypeptide is Bifunctional glutamine synthetase adenylyltransferase/adenylyl-removing enzyme (Xanthobacter autotrophicus (strain ATCC BAA-1158 / Py2)).